Reading from the N-terminus, the 41-residue chain is Large ribosomal subunit protein bL36 (41 aa).

The tract at residues 1–21 is disordered; that stretch reads MKIRNSLKSLRGRHRDNQLVR.

It belongs to the bacterial ribosomal protein bL36 family.

This is Large ribosomal subunit protein bL36 from Methylobacterium sp. (strain 4-46).